A 169-amino-acid polypeptide reads, in one-letter code: Biogenesis of lysosome-related organelles complex 1 subunit 4 (169 aa).

Belongs to the BLOC1S4 family. In terms of assembly, component of the biogenesis of lysosome-related organelles complex-1 (BLOC-1) composed of Blos1, Blos2, Blos3, Blos4, Dysb, Muted, Pldn and Snapin. Interacts with Pldn.

In terms of biological role, component of the biogenesis of lysosome-related organelles complex-1 (BLOC-1) involved in pigment granule biogenesis. The chain is Biogenesis of lysosome-related organelles complex 1 subunit 4 from Drosophila melanogaster (Fruit fly).